The sequence spans 113 residues: Small ribosomal subunit protein bS6 (113 aa).

This sequence belongs to the bacterial ribosomal protein bS6 family.

In terms of biological role, binds together with bS18 to 16S ribosomal RNA. The sequence is that of Small ribosomal subunit protein bS6 from Wigglesworthia glossinidia brevipalpis.